The primary structure comprises 154 residues: 6,7-dimethyl-8-ribityllumazine synthase (154 aa).

5-amino-6-(D-ribitylamino)uracil-binding positions include 22–23 (FN), 56–58 (SWE), and 80–82 (VLI). 85–86 (AT) is a binding site for (2S)-2-hydroxy-3-oxobutyl phosphate. The Proton donor role is filled by His88. Phe113 serves as a coordination point for 5-amino-6-(D-ribitylamino)uracil. Arg127 is a (2S)-2-hydroxy-3-oxobutyl phosphate binding site. Residue Lys135 coordinates 5-amino-6-(D-ribitylamino)uracil.

It belongs to the DMRL synthase family. In terms of assembly, forms an icosahedral capsid composed of 60 subunits, arranged as a dodecamer of pentamers.

It carries out the reaction (2S)-2-hydroxy-3-oxobutyl phosphate + 5-amino-6-(D-ribitylamino)uracil = 6,7-dimethyl-8-(1-D-ribityl)lumazine + phosphate + 2 H2O + H(+). It functions in the pathway cofactor biosynthesis; riboflavin biosynthesis; riboflavin from 2-hydroxy-3-oxobutyl phosphate and 5-amino-6-(D-ribitylamino)uracil: step 1/2. In terms of biological role, catalyzes the formation of 6,7-dimethyl-8-ribityllumazine by condensation of 5-amino-6-(D-ribitylamino)uracil with 3,4-dihydroxy-2-butanone 4-phosphate. This is the penultimate step in the biosynthesis of riboflavin. The polypeptide is 6,7-dimethyl-8-ribityllumazine synthase (ribH) (Aquifex aeolicus (strain VF5)).